We begin with the raw amino-acid sequence, 485 residues long: uncharacterized protein (485 aa).

Residues 1 to 23 (MRRRVCTVVRAVVCLLSTSLLTT) form the signal peptide. C24 carries N-palmitoyl cysteine lipidation. C24 carries the S-diacylglycerol cysteine lipid modification. The segment covering 308-327 (SAASSPAQCPSSPSSSSSSS) has biased composition (low complexity). The disordered stretch occupies residues 308–331 (SAASSPAQCPSSPSSSSSSSTNAG).

Belongs to the TP013X lipoprotein family.

The protein resides in the cell membrane. This is an uncharacterized protein from Treponema pallidum (strain Nichols).